The sequence spans 196 residues: Translation machinery-associated protein 22 (196 aa).

The SUI1 domain occupies 111–182; sequence IIIKRIERNK…EAKEYIEKLL (72 aa).

Belongs to the DENR family. As to quaternary structure, interacts with the 40S ribosomal subunit.

It is found in the cytoplasm. This is Translation machinery-associated protein 22 (TMA22) from Lodderomyces elongisporus (strain ATCC 11503 / CBS 2605 / JCM 1781 / NBRC 1676 / NRRL YB-4239) (Yeast).